Here is a 576-residue protein sequence, read N- to C-terminus: Laccase-1 (576 aa).

The N-terminal stretch at Met1–Ala19 is a signal peptide. 2 Plastocyanin-like domains span residues Thr21–Tyr145 and Val157–Glu304. N-linked (GlcNAc...) asparagine glycosylation is present at Asn41. The Cu cation site is built by His82, His84, His127, and His129. The cysteines at positions 103 and 562 are disulfide-linked. N-linked (GlcNAc...) asparagine glycans are attached at residues Asn182, Asn228, Asn294, and Asn368. Residues Asp376–Leu576 form the Plastocyanin-like 3 domain. 7 residues coordinate Cu cation: His471, His474, His476, His523, Cys524, His525, and His529.

This sequence belongs to the multicopper oxidase family. As to quaternary structure, homodimer. The cofactor is Cu cation. In mycelia, at a lower level than LCC4.

The protein localises to the secreted. The enzyme catalyses 4 hydroquinone + O2 = 4 benzosemiquinone + 2 H2O. In terms of biological role, lignin degradation and detoxification of lignin-derived products. In Thanatephorus cucumeris (Black scurf of potato), this protein is Laccase-1 (LCC1).